The following is a 561-amino-acid chain: Asparagine synthetase [glutamine-hydrolyzing] (561 aa).

C2 acts as the For GATase activity in catalysis. Residues 2–191 form the Glutamine amidotransferase type-2 domain; it reads CGIWALFGSD…PGHYEVLDLK (190 aa). L-glutamine is bound by residues 49-53, 75-77, and D97; these read RLAVV and NGE. Residues 213 to 536 form the Asparagine synthetase domain; the sequence is HALYDNVEKL…PGRADWLSHY (324 aa). Residues L256, I288, and 363-364 contribute to the ATP site; that span reads SG. At K385 the chain carries N6-acetyllysine. The residue at position 545 (T545) is a Phosphothreonine. The residue at position 557 (S557) is a Phosphoserine.

The enzyme catalyses L-aspartate + L-glutamine + ATP + H2O = L-asparagine + L-glutamate + AMP + diphosphate + H(+). It participates in amino-acid biosynthesis; L-asparagine biosynthesis; L-asparagine from L-aspartate (L-Gln route): step 1/1. The sequence is that of Asparagine synthetase [glutamine-hydrolyzing] (ASNS) from Pongo abelii (Sumatran orangutan).